A 489-amino-acid chain; its full sequence is Long chain base biosynthesis protein 2a (489 aa).

The chain crosses the membrane as a helical span at residues 2–22; the sequence is ITIPYLTAVSTYFSYGLLFAF. Lys-311 bears the N6-(pyridoxal phosphate)lysine mark.

Belongs to the class-II pyridoxal-phosphate-dependent aminotransferase family. In terms of assembly, heterodimer with LCB1. Component of the serine palmitoyltransferase (SPT) complex, composed of LCB1 and LCB2 (LCB2a or LCB2b). The cofactor is pyridoxal 5'-phosphate. Ubiquitous. Detected in leaves, roots, stems, flowers and at a lower level in mature seeds.

It localises to the endoplasmic reticulum membrane. It catalyses the reaction L-serine + hexadecanoyl-CoA + H(+) = 3-oxosphinganine + CO2 + CoA. The protein operates within lipid metabolism; sphingolipid metabolism. Serine palmitoyltransferase (SPT). The heterodimer formed with LCB1 constitutes the catalytic core. Involved in the regulation of the programmed cell death (PCD) signaling pathway. Plays an important role during male gametogenesis and embryogenesis. The chain is Long chain base biosynthesis protein 2a (LCB2a) from Arabidopsis thaliana (Mouse-ear cress).